Consider the following 527-residue polypeptide: V-set and immunoglobulin domain-containing protein 10 (527 aa).

The first 13 residues, 1–13 (MWTRRWIQFLVLC), serve as a signal peptide directing secretion. Ig-like C2-type domains follow at residues 14–111 (LHLW…LKVS), 123–212 (PTRT…RQLL), 216–306 (PPIT…CQIQ), and 310–399 (PLLE…KEIN). Residues 23–409 (YLGVFRGDVN…VWLTVNKPHN (387 aa)) lie on the Extracellular side of the membrane. Asn-32, Asn-41, Asn-52, Asn-64, Asn-74, Asn-90, Asn-129, Asn-139, Asn-191, Asn-206, Asn-226, Asn-260, Asn-276, Asn-325, Asn-346, and Asn-375 each carry an N-linked (GlcNAc...) asparagine glycan. Residues Cys-144 and Cys-194 are joined by a disulfide bond. Residues Cys-238 and Cys-288 are joined by a disulfide bond. A disulfide bridge links Cys-330 with Cys-387. Residues 410–430 (IVGLVTALLLLFLLVVAIITG) traverse the membrane as a helical segment. Over 431 to 527 (TVLYCDPQIY…TGEENQNEEI (97 aa)) the chain is Cytoplasmic. Positions 501 to 527 (RPPESTSSDLFSEVSDDTGEENQNEEI) are disordered. A compositionally biased stretch (acidic residues) spans 514 to 527 (VSDDTGEENQNEEI).

It localises to the membrane. The sequence is that of V-set and immunoglobulin domain-containing protein 10 (vsig10) from Xenopus laevis (African clawed frog).